Reading from the N-terminus, the 222-residue chain is Peptidyl-prolyl cis-trans isomerase FKBP7 (222 aa).

The first 23 residues, 1–23 (MPKTMHFLFRFIVFFYLWGLFTA), serve as a signal peptide directing secretion. Asparagine 45 is a glycosylation site (N-linked (GlcNAc...) asparagine). One can recognise a PPIase FKBP-type domain in the interval 53–145 (GDLLNAHYDG…IFEIELYAVT (93 aa)). EF-hand domains are found at residues 145 to 180 (TKGP…EFEK) and 189 to 222 (YQDA…HDEL). The Ca(2+) site is built by aspartate 158, aspartate 160, aspartate 162, glutamine 164, glutamate 169, aspartate 202, aspartate 204, aspartate 206, and glutamate 213. The short motif at 219 to 222 (HDEL) is the Prevents secretion from ER element.

Post-translationally, glycosylated.

The protein localises to the endoplasmic reticulum lumen. The enzyme catalyses [protein]-peptidylproline (omega=180) = [protein]-peptidylproline (omega=0). Its function is as follows. PPIases accelerate the folding of proteins during protein synthesis. The protein is Peptidyl-prolyl cis-trans isomerase FKBP7 (FKBP7) of Pongo abelii (Sumatran orangutan).